The sequence spans 601 residues: Probable sphingosine-1-phosphate lyase (601 aa).

K360 is modified (N6-(pyridoxal phosphate)lysine).

It belongs to the group II decarboxylase family. Sphingosine-1-phosphate lyase subfamily. It depends on pyridoxal 5'-phosphate as a cofactor.

The catalysed reaction is sphinganine 1-phosphate = hexadecanal + phosphoethanolamine. Its function is as follows. Cleaves phosphorylated sphingoid bases (PSBs), such as sphingosine-1-phosphate, into fatty aldehydes and phosphoethanolamine. Possibly implicated in influencing the macrophage autophagy pathway. The chain is Probable sphingosine-1-phosphate lyase from Legionella pneumophila subsp. pneumophila (strain Philadelphia 1 / ATCC 33152 / DSM 7513).